A 548-amino-acid chain; its full sequence is Synaptic vesicle 2-related protein (548 aa).

The Cytoplasmic portion of the chain corresponds to 1–87; that stretch reads MEEDLFQLRQ…GFGKFQWKLS (87 aa). A phosphoserine mark is found at Ser25 and Ser31. A helical transmembrane segment spans residues 88–108; the sequence is VLTGLAWMADAMEMMILSILA. Residues 109–122 are Vesicular-facing; that stretch reads PQLHCEWRLPSWQV. Residues 123-143 traverse the membrane as a helical segment; sequence ALLTSVVFVGMMSSSTLWGNI. Over 144 to 156 the chain is Cytoplasmic; that stretch reads SDQYGRKTGLKIS. Residues 157–177 form a helical membrane-spanning segment; the sequence is VLWTLYYGILSAFAPVYSWIL. The Vesicular portion of the chain corresponds to 178 to 180; sequence VLR. The helical transmembrane segment at 181–201 threads the bilayer; sequence GLVGFGIGGVPQSVTLYAEFL. Over 202 to 209 the chain is Cytoplasmic; it reads PMKARAKC. The helical transmembrane segment at 210-230 threads the bilayer; the sequence is ILLIEVFWAIGTVFEVVLAVF. The Vesicular portion of the chain corresponds to 231-238; the sequence is VMPSLGWR. The chain crosses the membrane as a helical span at residues 239–259; the sequence is WLLILSAVPLLLFAVLCFWLP. Over 260–316 the chain is Cytoplasmic; it reads ESARYDVLSGNQEKAIATLKRIATENGAPMPLGKLIISRQEDRGKMRDLFTPHFRWT. The helical transmembrane segment at 317 to 337 threads the bilayer; that stretch reads TLLLWFIWFSNAFSYYGLVLL. Topologically, residues 338–373 are vesicular; sequence TTELFQAGDVCSISSRKKAVEAKCSLACEYLSEEDY. The chain crosses the membrane as a helical span at residues 374-394; that stretch reads MDLLWTTLSEFPGVLVTLWII. The Cytoplasmic portion of the chain corresponds to 395-401; that stretch reads DRLGRKK. The chain crosses the membrane as a helical span at residues 402–422; sequence TMALCFVVFSFCSLLLFICVG. Residues 423–425 lie on the Vesicular side of the membrane; it reads RNM. A helical transmembrane segment spans residues 426–446; that stretch reads LTLLLFIARAFISGGFQAAYV. At 447–457 the chain is on the cytoplasmic side; the sequence is YTPEVYPTATR. Residues 458 to 478 form a helical membrane-spanning segment; the sequence is ALGLGTCSGMARVGALITPFI. The Vesicular portion of the chain corresponds to 479–489; that stretch reads AQVMLESSVYL. Residues 490–510 traverse the membrane as a helical segment; sequence TLAVYSGCCLLAALASCFLPI. Residues 511–548 are Cytoplasmic-facing; sequence ETKGRGLQESSHREWGQEMVGRGAHGTGVARSNSGSQE. The tract at residues 528–548 is disordered; the sequence is EMVGRGAHGTGVARSNSGSQE. Ser542 bears the Phosphoserine mark.

The protein belongs to the major facilitator superfamily. Detected in brain and adrenal medulla.

The protein resides in the cytoplasmic vesicle. It is found in the secretory vesicle. The protein localises to the synaptic vesicle membrane. The polypeptide is Synaptic vesicle 2-related protein (SVOP) (Bos taurus (Bovine)).